Reading from the N-terminus, the 833-residue chain is ERAD-associated E3 ubiquitin-protein ligase component HRD3 (833 aa).

A signal peptide spans 1 to 20 (MITLLLYLCVICNAIVLIRA). N-linked (GlcNAc...) asparagine glycans are attached at residues N101, N123, and N142. A Sel1-like 1 repeat occupies 103–139 (SEATYTLSQIHLWSQYNFPHNMTLAHKYLEKFNDLTH). 6 Sel1-like repeats span residues 143–186 (HSAI…QLGN), 187–222 (LKAK…EQLR), 413–445 (GRAC…KTQA), 552–595 (ETAQ…KQGN), 596–627 (IDAG…LKYS), and 628–663 (IQAI…EHDH). The N-linked (GlcNAc...) asparagine glycan is linked to N429. N611 carries an N-linked (GlcNAc...) asparagine glycan. Residues 768 to 788 (LVTMGCILGIFLLSILMSTLA) traverse the membrane as a helical segment. Residues 805–824 (NGNRQQEQQQQQQAQGPPGW) are disordered. Positions 809 to 819 (QQEQQQQQQAQ) are enriched in low complexity.

This sequence belongs to the sel-1 family. As to quaternary structure, component of the HRD1 ubiquitin ligase complex which contains the E3 ligase HRD1, its cofactors HRD3, USA1 and DER1, substrate recruiting factor YOS9 and CDC48-binding protein UBX2. Within the complex, interacts directly with HRD1 and YOS9 (via N-terminus). In ERAD-L, HRD3 and YOS9 jointly bind misfolded glycoproteins in the endoplasmic reticulum (ER) lumen. Movement of ERAD-L substrates through the ER membrane is facilitated by HRD1 and DER1 which have lateral gates facing each other and which distort the membrane region between the lateral gates, making it much thinner than a normal phospholipid bilayer. Substrates insert into the membrane as a hairpin loop with one strand interacting with DER1 and the other with HRD1. The HRD1 complex interacts with the heterotrimeric CDC48-NPL4-UFD1 ATPase complex which is recruited by UBX2 via its interaction with CDC48 and which moves ubiquitinated substrates to the cytosol for targeting to the proteasome. The HRD1 complex interacts with the ERAD substrates HMG1 and HMG2. Interacts with KAR2.

The protein resides in the endoplasmic reticulum membrane. In terms of biological role, component of the endoplasmic reticulum quality control (ERQC) system involved in ubiquitin-dependent degradation of misfolded endoplasmic reticulum proteins. Component of the HRD1 ubiquitin ligase complex, which is part of the ERAD-L and ERAD-M pathways responsible for the rapid degradation of soluble lumenal and membrane proteins with misfolded lumenal domains (ERAD-L), or ER-membrane proteins with misfolded transmembrane domains (ERAD-M). ERAD-L substrates are ubiquitinated through HRD1 in conjunction with the E2 ubiquitin-conjugating enzymes UBC1 and UBC7-CUE1. Ubiquitinated substrates are then removed to the cytosol via the action of the CDC48-NPL4-UFD1 ATPase complex and targeted to the proteasome. ERAD-M substrates are processed by the same HRD1-HRD3 core complex, but only a subset of the other components is required for ERAD-M. Stabilizes the HRD1 ubiquitin-protein ligase. Also functions in recruiting misfolded protein substrates in conjunction with YOS9. The polypeptide is ERAD-associated E3 ubiquitin-protein ligase component HRD3 (HRD3) (Saccharomyces cerevisiae (strain ATCC 204508 / S288c) (Baker's yeast)).